Consider the following 284-residue polypeptide: Diaminopimelate epimerase (284 aa).

Residues Asn20, Gln53, and Asn73 each contribute to the substrate site. Catalysis depends on Cys82, which acts as the Proton donor. Residues 83 to 84 (GN), Asn167, Asn200, and 218 to 219 (ER) contribute to the substrate site. The active-site Proton acceptor is the Cys227. 228–229 (GS) provides a ligand contact to substrate.

Belongs to the diaminopimelate epimerase family. Homodimer.

It localises to the cytoplasm. It catalyses the reaction (2S,6S)-2,6-diaminopimelate = meso-2,6-diaminopimelate. It functions in the pathway amino-acid biosynthesis; L-lysine biosynthesis via DAP pathway; DL-2,6-diaminopimelate from LL-2,6-diaminopimelate: step 1/1. In terms of biological role, catalyzes the stereoinversion of LL-2,6-diaminopimelate (L,L-DAP) to meso-diaminopimelate (meso-DAP), a precursor of L-lysine and an essential component of the bacterial peptidoglycan. This chain is Diaminopimelate epimerase, found in Xylella fastidiosa (strain M23).